Here is a 309-residue protein sequence, read N- to C-terminus: Ribosomal RNA large subunit methyltransferase F (309 aa).

This sequence belongs to the methyltransferase superfamily. METTL16/RlmF family.

The protein resides in the cytoplasm. The catalysed reaction is adenosine(1618) in 23S rRNA + S-adenosyl-L-methionine = N(6)-methyladenosine(1618) in 23S rRNA + S-adenosyl-L-homocysteine + H(+). Functionally, specifically methylates the adenine in position 1618 of 23S rRNA. The polypeptide is Ribosomal RNA large subunit methyltransferase F (Cronobacter sakazakii (strain ATCC BAA-894) (Enterobacter sakazakii)).